The primary structure comprises 508 residues: Probable cytochrome P450 6d5 (508 aa).

Residue Cys453 coordinates heme.

This sequence belongs to the cytochrome P450 family. It depends on heme as a cofactor.

Its subcellular location is the endoplasmic reticulum membrane. It is found in the microsome membrane. In terms of biological role, may be involved in the metabolism of insect hormones and in the breakdown of synthetic insecticides. The chain is Probable cytochrome P450 6d5 (Cyp6d5) from Drosophila melanogaster (Fruit fly).